The following is a 160-amino-acid chain: General odorant-binding protein 2 (160 aa).

Residues 1-20 (MFSFLILVFVASVADSVIGT) form the signal peptide. 3 disulfides stabilise this stretch: C38–C73, C69–C127, and C116–C136.

Belongs to the PBP/GOBP family. In terms of assembly, homodimer. As to expression, detected in antenna (at protein level). Expressed at high levels in antenna.

In terms of biological role, present in the aqueous fluid surrounding olfactory sensory dendrites and are thought to aid in the capture and transport of hydrophobic odorants into and through this fluid. The protein is General odorant-binding protein 2 of Bombyx mori (Silk moth).